The following is a 508-amino-acid chain: Photosystem II CP47 reaction center protein (508 aa).

6 consecutive transmembrane segments (helical) span residues 21-36 (SVHI…WAGS), 101-115 (IVFS…IWHW), 140-156 (GIHL…FGAF), 203-218 (IAAG…FHLS), 237-252 (VLSS…AFVV), and 457-472 (SFAL…HGAR).

It belongs to the PsbB/PsbC family. PsbB subfamily. PSII is composed of 1 copy each of membrane proteins PsbA, PsbB, PsbC, PsbD, PsbE, PsbF, PsbH, PsbI, PsbJ, PsbK, PsbL, PsbM, PsbT, PsbX, PsbY, PsbZ, Psb30/Ycf12, at least 3 peripheral proteins of the oxygen-evolving complex and a large number of cofactors. It forms dimeric complexes. Binds multiple chlorophylls. PSII binds additional chlorophylls, carotenoids and specific lipids. serves as cofactor.

It is found in the plastid. The protein localises to the chloroplast thylakoid membrane. One of the components of the core complex of photosystem II (PSII). It binds chlorophyll and helps catalyze the primary light-induced photochemical processes of PSII. PSII is a light-driven water:plastoquinone oxidoreductase, using light energy to abstract electrons from H(2)O, generating O(2) and a proton gradient subsequently used for ATP formation. The polypeptide is Photosystem II CP47 reaction center protein (Lactuca sativa (Garden lettuce)).